We begin with the raw amino-acid sequence, 462 residues long: Keratin, type I cytoskeletal 28 (462 aa).

The tract at residues 1 to 26 (MSLRFSGGSRHVGIQSGSLRPPSGGA) is disordered. The head stretch occupies residues 1 to 83 (MSLRFSGGSR…GSEGGLLSGN (83 aa)). A coil 1A region spans residues 84–119 (EKVTMQNLNNRLASYLDNVKALEEANSELERKIKTW). Positions 84–399 (EKVTMQNLNN…RLIDGDENSC (316 aa)) constitute an IF rod domain. The segment at 120–141 (HEKYGPGSCRGLDRDYSKYHLT) is linker 1. A coil 1B region spans residues 142–233 (IEDLKSKIIS…KNHEEEMKVL (92 aa)). The linker 12 stretch occupies residues 234 to 256 (QCAAGGNVNVEMNAAPGVDLTVL). The coil 2 stretch occupies residues 257–395 (LNNMRAEYEA…ETYCRLIDGD (139 aa)). The tail stretch occupies residues 396-462 (ENSCSVSKGF…NGKAEQRVPF (67 aa)).

It belongs to the intermediate filament family. Heterotetramer of two type I and two type II keratins. In terms of tissue distribution, in the hair follicle and bulb, uniformly expressed in all three layers of the inner root sheath (the Henle layer, the Huxley layer and the cuticle) and observed in matrix cells (at protein level).

The protein resides in the cytoplasm. In terms of biological role, essential for the proper assembly of types I and II keratin protein complexes and the formation of keratin intermediate filaments in the inner root sheath (irs). In Mus musculus (Mouse), this protein is Keratin, type I cytoskeletal 28.